The sequence spans 131 residues: D-ribose pyranase (131 aa).

H20 functions as the Proton donor in the catalytic mechanism. Substrate is bound by residues D28, H98, and 120-122 (YAN).

Belongs to the RbsD / FucU family. RbsD subfamily. In terms of assembly, homodecamer.

The protein resides in the cytoplasm. It carries out the reaction beta-D-ribopyranose = beta-D-ribofuranose. It participates in carbohydrate metabolism; D-ribose degradation; D-ribose 5-phosphate from beta-D-ribopyranose: step 1/2. Catalyzes the interconversion of beta-pyran and beta-furan forms of D-ribose. In Bacillus cereus (strain ZK / E33L), this protein is D-ribose pyranase.